The sequence spans 150 residues: MKVIFLVDVKGKGKKGEIKEVPTGYAQNFLIKKNLAKEASSQAIGQLRGQQKAEEKAQAEILAEAKAVKKILDDEKTRVQFKEKVGPDGRTFGSITAKKISEELQKQFKVKVDKRHIVLDHPIRAIGLIEVPVKLHKEVTAEIKLNIAEA.

Belongs to the bacterial ribosomal protein bL9 family.

Functionally, binds to the 23S rRNA. The polypeptide is Large ribosomal subunit protein bL9 (Streptococcus equi subsp. equi (strain 4047)).